An 886-amino-acid chain; its full sequence is Adhesion G protein-coupled receptor E1 (886 aa).

The N-terminal stretch at 1–20 (MRGFNLLLFWGCCVMHSWEG) is a signal peptide. Topologically, residues 21–599 (HIRPTRKPNT…IMASGELTMD (579 aa)) are extracellular. Residues 31 to 79 (KGNNCRDSTLCPAYATCTNTVDSYYCACKQGFLSSNGQNHFKDPGVRCK) enclose the EGF-like 1 domain. Cystine bridges form between cysteine 35/cysteine 47, cysteine 41/cysteine 56, cysteine 58/cysteine 78, cysteine 84/cysteine 97, cysteine 91/cysteine 106, cysteine 108/cysteine 130, cysteine 136/cysteine 148, cysteine 142/cysteine 157, cysteine 159/cysteine 170, cysteine 176/cysteine 188, cysteine 182/cysteine 197, cysteine 199/cysteine 219, cysteine 225/cysteine 235, cysteine 229/cysteine 244, cysteine 246/cysteine 266, cysteine 272/cysteine 285, cysteine 279/cysteine 294, and cysteine 296/cysteine 315. One can recognise an EGF-like 2; calcium-binding domain in the interval 80-131 (DIDECSQSPQPCGPNSSCKNLSGRYKCSCLDGFSSPTGNDWVPGKPGNFSCT). Residues asparagine 94, asparagine 99, and asparagine 127 are each glycosylated (N-linked (GlcNAc...) asparagine). In terms of domain architecture, EGF-like 3; calcium-binding spans 132–171 (DINECLTSSVCPEHSDCVNSMGSYSCSCQVGFISRNSTCE). A glycan (N-linked (GlcNAc...) asparagine) is linked at asparagine 167. One can recognise an EGF-like 4; calcium-binding domain in the interval 172–220 (DVDECADPRACPEHATCNNTVGNYSCFCNPGFESSSGHLSFQGLKASCE). N-linked (GlcNAc...) asparagine glycans are attached at residues asparagine 189 and asparagine 194. The EGF-like 5; calcium-binding domain maps to 221–267 (DIDECTEMCPINSTCTNTPGSYFCTCHPGFAPSNGQLNFTDQGVECR). N-linked (GlcNAc...) asparagine glycans are attached at residues asparagine 232 and asparagine 258. The EGF-like 6; calcium-binding domain occupies 268–316 (DIDECRQDPSTCGPNSICTNALGSYSCGCIAGFHPNPEGSQKDGNFSCQ). N-linked (GlcNAc...) asparagine glycans are attached at residues asparagine 312, asparagine 366, asparagine 375, and asparagine 448. One can recognise a GAIN-B domain in the interval 431 to 597 (EYLDIESKVI…AVIMASGELT (167 aa)). 2 disulfide bridges follow: cysteine 550-cysteine 579 and cysteine 567-cysteine 581. Positions 550–597 (CVSWSTDVKGGRWTSFGCVILEASETYTICSCNQMANLAVIMASGELT) are GPS. A helical membrane pass occupies residues 600 to 627 (FSLYIISHVGIIISLVCLVLAIATFLLC). Residues 628 to 634 (RSIRNHN) lie on the Cytoplasmic side of the membrane. Residues 635–656 (TYLHLHLCVCLLLAKTLFLAGI) traverse the membrane as a helical segment. Topologically, residues 657–666 (HKTDNKMGCA) are extracellular. Residues 667–690 (IIAGFLHYLFLACFFWMLVEAVIL) form a helical membrane-spanning segment. Topologically, residues 691–709 (FLMVRNLKVVNYFSSRNIK) are cytoplasmic. The chain crosses the membrane as a helical span at residues 710–731 (MLHICAFGYGLPMLVVVISASV). Residues 732–747 (QPQGYGMHNRCWLNTE) lie on the Extracellular side of the membrane. The chain crosses the membrane as a helical span at residues 748–776 (TGFIWSFLGPVCTVIVINSLLLTWTLWIL). The Cytoplasmic portion of the chain corresponds to 777-794 (RQRLSSVNAEVSTLKDTR). The chain crosses the membrane as a helical span at residues 795-814 (LLTFKAFAQLFILGCSWVLG). Residues 815 to 829 (IFQIGPVAGVMAYLF) are Extracellular-facing. A helical membrane pass occupies residues 830–852 (TIINSLQGAFIFLIHCLLNGQVR). Over 853 to 886 (EEYKRWITGKTKPSSQSQTSRILLSSMPSASKTG) the chain is Cytoplasmic. The interval 862–886 (KTKPSSQSQTSRILLSSMPSASKTG) is disordered. Positions 863–886 (TKPSSQSQTSRILLSSMPSASKTG) are enriched in polar residues.

It belongs to the G-protein coupled receptor 2 family. Adhesion G-protein coupled receptor (ADGR) subfamily. In terms of tissue distribution, expression is restricted to eosinophils.

It is found in the cell membrane. Orphan receptor involved in cell adhesion and probably in cell-cell interactions specifically involving cells of the immune system. May play a role in regulatory T-cells (Treg) development. The polypeptide is Adhesion G protein-coupled receptor E1 (Homo sapiens (Human)).